The following is a 169-amino-acid chain: Putative pre-16S rRNA nuclease (169 aa).

The segment covering 1 to 19 has biased composition (basic and acidic residues); that stretch reads MTDSDHRLPDRPGEGDPGR. Positions 1-24 are disordered; that stretch reads MTDSDHRLPDRPGEGDPGRGRRIG.

The protein belongs to the YqgF nuclease family.

Its subcellular location is the cytoplasm. Its function is as follows. Could be a nuclease involved in processing of the 5'-end of pre-16S rRNA. This chain is Putative pre-16S rRNA nuclease, found in Mycobacterium sp. (strain KMS).